Reading from the N-terminus, the 432-residue chain is Glutamate-1-semialdehyde 2,1-aminomutase (432 aa).

N6-(pyridoxal phosphate)lysine is present on lysine 267.

Belongs to the class-III pyridoxal-phosphate-dependent aminotransferase family. HemL subfamily. Homodimer. Pyridoxal 5'-phosphate serves as cofactor.

It is found in the cytoplasm. It catalyses the reaction (S)-4-amino-5-oxopentanoate = 5-aminolevulinate. It functions in the pathway porphyrin-containing compound metabolism; protoporphyrin-IX biosynthesis; 5-aminolevulinate from L-glutamyl-tRNA(Glu): step 2/2. This Rhodococcus erythropolis (strain PR4 / NBRC 100887) protein is Glutamate-1-semialdehyde 2,1-aminomutase.